The primary structure comprises 296 residues: Pre-mRNA-splicing factor CWC23 (296 aa).

Residues 14–86 (DLYKLLELNY…AKKAEYDQWV (73 aa)) form the J domain.

It belongs to the DnaJ family. Associated with the spliceosome.

The protein localises to the cytoplasm. Its subcellular location is the nucleus. Functionally, involved in pre-mRNA splicing. May be involved in endoplasmic reticulum-associated protein degradation (ERAD) and required for growth at low and high temperatures. The protein is Pre-mRNA-splicing factor CWC23 (CWC23) of Candida glabrata (strain ATCC 2001 / BCRC 20586 / JCM 3761 / NBRC 0622 / NRRL Y-65 / CBS 138) (Yeast).